Reading from the N-terminus, the 311-residue chain is Protoheme IX farnesyltransferase 1 (311 aa).

9 consecutive transmembrane segments (helical) span residues V31–N51, P52–L72, V97–L117, V119–I139, I152–G172, L179–F199, I225–T245, G247–V267, and L281–I301.

Belongs to the UbiA prenyltransferase family. Protoheme IX farnesyltransferase subfamily.

It localises to the cell inner membrane. It catalyses the reaction heme b + (2E,6E)-farnesyl diphosphate + H2O = Fe(II)-heme o + diphosphate. It participates in porphyrin-containing compound metabolism; heme O biosynthesis; heme O from protoheme: step 1/1. Its function is as follows. Converts heme B (protoheme IX) to heme O by substitution of the vinyl group on carbon 2 of heme B porphyrin ring with a hydroxyethyl farnesyl side group. The polypeptide is Protoheme IX farnesyltransferase 1 (Mesorhizobium japonicum (strain LMG 29417 / CECT 9101 / MAFF 303099) (Mesorhizobium loti (strain MAFF 303099))).